The following is a 655-amino-acid chain: p-hydroxybenzoic acid efflux pump subunit AaeB (655 aa).

Transmembrane regions (helical) follow at residues Phe13 to Leu33, Trp38 to Pro58, Leu69 to Ile89, Leu93 to Val113, Trp121 to Leu141, Glu152 to Val172, Leu370 to Val390, Phe407 to Pro427, Gln431 to Val451, Met459 to Phe479, and Phe482 to Leu502.

It belongs to the aromatic acid exporter ArAE (TC 2.A.85) family.

It is found in the cell inner membrane. In terms of biological role, forms an efflux pump with AaeA. Could function as a metabolic relief valve, allowing to eliminate certain compounds when they accumulate to high levels in the cell. In Citrobacter koseri (strain ATCC BAA-895 / CDC 4225-83 / SGSC4696), this protein is p-hydroxybenzoic acid efflux pump subunit AaeB.